The primary structure comprises 339 residues: Adenylosuccinate synthetase (339 aa).

GTP contacts are provided by residues 12–18 (GDEGKGS) and 42–44 (GHS). The Proton acceptor role is filled by D13. The Mg(2+) site is built by D13 and G42. Residues 13 to 16 (DEGK), 40 to 43 (NAGH), T127, R141, Q179, T194, and R256 each bind IMP. The Proton donor role is filled by H43. Position 252–258 (252–258 (TVTGRRR)) interacts with substrate. GTP-binding positions include R258, 284–286 (MLD), and 324–326 (KTG).

The protein belongs to the adenylosuccinate synthetase family. Homodimer. Mg(2+) is required as a cofactor.

The protein resides in the cytoplasm. The catalysed reaction is IMP + L-aspartate + GTP = N(6)-(1,2-dicarboxyethyl)-AMP + GDP + phosphate + 2 H(+). Its pathway is purine metabolism; AMP biosynthesis via de novo pathway; AMP from IMP: step 1/2. In terms of biological role, plays an important role in the de novo pathway of purine nucleotide biosynthesis. Catalyzes the first committed step in the biosynthesis of AMP from IMP. The protein is Adenylosuccinate synthetase of Thermococcus sibiricus (strain DSM 12597 / MM 739).